A 601-amino-acid polypeptide reads, in one-letter code: Potassium voltage-gated channel subfamily A member 5 (601 aa).

The interval 1–200 (MEIALVPLEN…FYQLGDEAME (200 aa)) is tetramerization domain. At 1–236 (MEIALVPLEN…LIFEYPESSG (236 aa)) the chain is on the cytoplasmic side. The segment at 19–93 (GGEAGTGCSQ…DEEGEGDPAL (75 aa)) is disordered. The segment covering 65 to 74 (RPLPPLPQDP) has biased composition (pro residues). Lys-210 participates in a covalent cross-link: Glycyl lysine isopeptide (Lys-Gly) (interchain with G-Cter in SUMO). Residues 237 to 258 (SARGIAIVSVLVILISIITFCL) form a helical membrane-spanning segment. Over 259-312 (ETLPEFRDERELLRHPPVPHQPLGPSRGANGSGPLAPPSGPTVAPLLPRTLADP) the chain is Extracellular. Positions 275-297 (PVPHQPLGPSRGANGSGPLAPPS) are disordered. Asn-288 carries N-linked (GlcNAc...) asparagine glycosylation. Residues 313 to 334 (FFIVETTCVIWFTFELLVRFFA) form a helical membrane-spanning segment. A lipid anchor (S-palmitoyl cysteine) is attached at Cys-335. Topologically, residues 335–345 (CPSKAEFSRNI) are cytoplasmic. A helical membrane pass occupies residues 346–366 (MNIIDVVAIFPYFITLGTELA). Residues 367–383 (EQPGGGGGGQNGQQAMS) are Extracellular-facing. The helical; Voltage-sensor transmembrane segment at 384-404 (LAILRVIRLVRVFRIFKLSRH) threads the bilayer. Topologically, residues 405 to 419 (SKGLQILGKTLQASM) are cytoplasmic. Residues 406–419 (KGLQILGKTLQASM) are S4-S5 linker. The chain crosses the membrane as a helical span at residues 420-441 (RELGLLIFFLFIGVILFSSAVY). Residues 442 to 455 (FAEADNQETHFSSI) are Extracellular-facing. Residues 456–467 (PDAFWWAVVTMT) constitute an intramembrane region (helical). A Selectivity filter motif is present at residues 468–473 (TVGYGD). An intramembrane segment occupies 468-475 (TVGYGDMR). At 476 to 482 (PVTVGGK) the chain is on the extracellular side. Residues 483–511 (IVGSLCAIAGVLTIALPVPVIVSNFNYFY) form a helical membrane-spanning segment. Over 512–601 (HRETDHEEQA…CLDTSRETDL (90 aa)) the chain is Cytoplasmic. The tract at residues 521–545 (AALKEEQGSQSHGTGLDSGGPRKAS) is disordered. Lys-524 is covalently cross-linked (Glycyl lysine isopeptide (Lys-Gly) (interchain with G-Cter in SUMO)). Positions 599 to 601 (TDL) match the PDZ-binding motif.

It belongs to the potassium channel family. A (Shaker) (TC 1.A.1.2) subfamily. Kv1.5/KCNA5 sub-subfamily. Homotetramer and heterotetramer of potassium channel proteins. Interacts with DLG1, which enhances channel currents. Forms a ternary complex with DLG1 and CAV3. Interacts with KCNAB1. Interacts with UBE2I. Interacts with XIRP2; the interaction is required for normal action potential configuration in the heart. In terms of processing, glycosylated. Sumoylated on Lys-210, and Lys-524, preferentially with SUMO3. Sumoylation regulates the voltage sensitivity of the channel.

It localises to the cell membrane. The enzyme catalyses K(+)(in) = K(+)(out). Functionally, voltage-gated potassium channel that mediates transmembrane potassium transport in excitable membranes. Forms tetrameric potassium-selective channels through which potassium ions pass in accordance with their electrochemical gradient. The channel alternates between opened and closed conformations in response to the voltage difference across the membrane. Can form functional homotetrameric channels and heterotetrameric channels that contain variable proportions of KCNA1, KCNA2, KCNA4, KCNA5, and possibly other family members as well; channel properties depend on the type of alpha subunits that are part of the channel. Channel properties are modulated by cytoplasmic beta subunits that regulate the subcellular location of the alpha subunits and promote rapid inactivation. Homotetrameric channels display rapid activation and slow inactivation. Required for normal electrical conduction including formation of the infranodal ventricular conduction system and normal action potential configuration, as a result of its interaction with XIRP2. May play a role in regulating the secretion of insulin in normal pancreatic islets. This is Potassium voltage-gated channel subfamily A member 5 (KCNA5) from Mustela putorius furo (European domestic ferret).